Here is a 270-residue protein sequence, read N- to C-terminus: MIKSIILQAIMVLSTLTSVHGANSSGCGKQPTLVNGVHKINDREYILKVPDNYNANKPHHLIFGLHWRGGNMNSVVNGESVEPWYGLETRAQGSAILVAPNGRNAGWANTNGEDVALIDAIIKQVEDDLCIDQSSRFATGFSWGGGMSYALACARAKEFRAVSVLSGGVISGCEGGHDPIAYLGIHGISDPVLPFDGGVTLANKFAANNGCQQAYVGKPGLGSHSSVQTDFKGCSRPVSFIAYDGGHDAAPLGVGNPLAPDATWKFFMAA.

An N-terminal signal peptide occupies residues 1–21 (MIKSIILQAIMVLSTLTSVHG). N23 carries an N-linked (GlcNAc...) asparagine glycan.

This sequence belongs to the faeC family.

The protein localises to the secreted. The enzyme catalyses feruloyl-polysaccharide + H2O = ferulate + polysaccharide.. Its function is as follows. Involved in degradation of plant cell walls. Hydrolyzes the feruloyl-arabinose ester bond in arabinoxylans, and the feruloyl-galactose ester bond in pectin. Active against paranitrophenyl-acetate, methyl ferulate and wheat arabinoxylan. The protein is Probable feruloyl esterase C (faeC) of Aspergillus flavus (strain ATCC 200026 / FGSC A1120 / IAM 13836 / NRRL 3357 / JCM 12722 / SRRC 167).